We begin with the raw amino-acid sequence, 65 residues long: Large ribosomal subunit protein bL33c (65 aa).

Belongs to the bacterial ribosomal protein bL33 family.

Its subcellular location is the plastid. The polypeptide is Large ribosomal subunit protein bL33c (Aneura mirabilis (Parasitic liverwort)).